Consider the following 1332-residue polypeptide: MAERANLVFHNKVIGGTAIKRIISRLIDHFGMAYTSHILDQVKTLGFRQATTTSISLGIDDLLTIPSKGWLVQDAEQQSLILEKHHHYGNVHAVEKLRQSIEIWYATSEYLRQEMNPNFSMTDPFNPVHIMSFSGARGNASQVHQLVGMRGLMSDPQGQMIDLPIQSNLREGLSLTEYIISCYGARKGVVDTAVRTSDAGYLTRRLVEVVQHIVVRRTDCGTVRGISVNTRNRMMSERILIQTLIGRVLADDIYIGSRCIVVRNQDIGIGLINRFINFQTQPIFIRTPFTCRNTSWICRLCYGRSPIHGNLVELGEAVGIIAGQSIGEPGTQLTLRTFHTGGVFTGGTAEYVRSPSNGKIKFNENSAYPTRTRHGHPAFLCYIDLYVTIESNDIMHNVIIPPKSFLLVQNDQYVKSEQIIAEIRAGTYTLNLKEKVRKHIFSDSEGEMHWSTNIYHVSEFAYSNVHILPKTSHLWILSGNSHKSDTVSLSLLKDQDQMSTHSLPTAKRNTSNFLVSNNQVRLCPDHCHFMHPTISPDTSNLLAKKRRNRFIIPFLFRSIRERNNELMPDISVEIPIDGIIHKNSILAYFDDPQYRTQSSGIAKYKTIGIHSIFQKEDLIEYRGIREFKPKYQIKVDRFFFIPQEVHILSESSSIMVRNNSIIGVNTPITLNKKSRVGGLVRVEKNKKKIELKIFSGDIHFPGEIDKISQHSAILIPPEMVKKKNSKESKKKTNWRYIQWITTTKKKYFVLVRPVILYDIADSINLVKLFPQDLFKEWDNLELKVLNFILYGNGKSIRGILDTSIQLVRTCLVLNWNEDEKSSSIEEALASFVEVSTNGLIRYFLRIDLVKSHISYIRKRNDPSSSGLISYNESDRININPFFSIYKENIQQSLSQKHGTIRMLLNRNKENRSFIILSSSNCFQMGPFNNVKYHNGIKEEINQFKRNHKIPIKISLGPLGVAPQIANFFSFYHLITHNKISSIKKNLQLNKFKETFQVIKYYLMDENERIYKPDLYNNIILNPFHLNWDFIHPNYCEKTFPIISLGQFICENVCIVQTKNGPNLKSGQVITVQMDFVGIRLANPYLATPGATIHGHYGEMLYEGDILVTFIYEKSRSGDITQGLPKVEQVLEVRSIDSISMNLEKRIDAWNERITGILGIPWRFLIGAELTIAQSRISLVNKIQRVYRSQGVHIHNRHIEIIVRQITSKVLVSEDGMSNVFSPGELIGLLRAQRTGRALEESICYRTLLLGITKTSLNTQSFISEASFQETARVLAKAALRGRIDWLKGLKENLVLGGIIPVGTGFKKIGDRSSARQDTKITLETIKIIRGRN.

Zn(2+) is bound by residues Cys220, Cys291, Cys298, and Cys301.

It belongs to the RNA polymerase beta' chain family. RpoC2 subfamily. In plastids the minimal PEP RNA polymerase catalytic core is composed of four subunits: alpha, beta, beta', and beta''. When a (nuclear-encoded) sigma factor is associated with the core the holoenzyme is formed, which can initiate transcription. The cofactor is Zn(2+).

The protein resides in the plastid. It localises to the chloroplast. It carries out the reaction RNA(n) + a ribonucleoside 5'-triphosphate = RNA(n+1) + diphosphate. DNA-dependent RNA polymerase catalyzes the transcription of DNA into RNA using the four ribonucleoside triphosphates as substrates. This chain is DNA-directed RNA polymerase subunit beta'', found in Lotus japonicus (Lotus corniculatus var. japonicus).